Reading from the N-terminus, the 345-residue chain is S-adenosylmethionine:tRNA ribosyltransferase-isomerase (345 aa).

The protein belongs to the QueA family. As to quaternary structure, monomer.

It is found in the cytoplasm. It carries out the reaction 7-aminomethyl-7-carbaguanosine(34) in tRNA + S-adenosyl-L-methionine = epoxyqueuosine(34) in tRNA + adenine + L-methionine + 2 H(+). The protein operates within tRNA modification; tRNA-queuosine biosynthesis. In terms of biological role, transfers and isomerizes the ribose moiety from AdoMet to the 7-aminomethyl group of 7-deazaguanine (preQ1-tRNA) to give epoxyqueuosine (oQ-tRNA). This is S-adenosylmethionine:tRNA ribosyltransferase-isomerase from Thermodesulfovibrio yellowstonii (strain ATCC 51303 / DSM 11347 / YP87).